We begin with the raw amino-acid sequence, 718 residues long: DNA ligase (718 aa).

NAD(+)-binding positions include 44–48 (DADYD), 93–94 (SL), and E127. K129 functions as the N6-AMP-lysine intermediate in the catalytic mechanism. R150, E186, K302, and K326 together coordinate NAD(+). Zn(2+) contacts are provided by C432, C435, C456, and C462. Positions 640–718 (TAGSPVAGKT…EDEWLALISG (79 aa)) constitute a BRCT domain.

The protein belongs to the NAD-dependent DNA ligase family. LigA subfamily. Mg(2+) serves as cofactor. It depends on Mn(2+) as a cofactor.

The enzyme catalyses NAD(+) + (deoxyribonucleotide)n-3'-hydroxyl + 5'-phospho-(deoxyribonucleotide)m = (deoxyribonucleotide)n+m + AMP + beta-nicotinamide D-nucleotide.. Functionally, DNA ligase that catalyzes the formation of phosphodiester linkages between 5'-phosphoryl and 3'-hydroxyl groups in double-stranded DNA using NAD as a coenzyme and as the energy source for the reaction. It is essential for DNA replication and repair of damaged DNA. This is DNA ligase from Rhizobium etli (strain ATCC 51251 / DSM 11541 / JCM 21823 / NBRC 15573 / CFN 42).